Reading from the N-terminus, the 155-residue chain is DNA-directed RNA polymerase 1A (155 aa).

The active site involves Asp-88.

The protein belongs to the phage and mitochondrial RNA polymerase family.

It carries out the reaction RNA(n) + a ribonucleoside 5'-triphosphate = RNA(n+1) + diphosphate. DNA-dependent RNA polymerase catalyzes the transcription of DNA into RNA using the four ribonucleoside triphosphates as substrates. The sequence is that of DNA-directed RNA polymerase 1A (RPOT1-SYL) from Nicotiana tabacum (Common tobacco).